The chain runs to 281 residues: uncharacterized protein (281 aa).

It localises to the plastid. It is found in the chloroplast. This is an uncharacterized protein from Euglena gracilis.